A 64-amino-acid chain; its full sequence is Small ribosomal subunit protein bS21 (64 aa).

Belongs to the bacterial ribosomal protein bS21 family.

The polypeptide is Small ribosomal subunit protein bS21 (Karelsulcia muelleri (strain GWSS) (Sulcia muelleri)).